We begin with the raw amino-acid sequence, 320 residues long: MARKKIALIGAGQIGGTLAHLAGLKELGDVVLFDIADGVPQGKGLDIAESAPVDGFDAKYSGASDYSAIAGADVVIVTAGVPRKPGMSRDDLIGINLKVMEAVGTGIKTHAPNAFVICITNPLDAMVWALQKFSGLDPKKIVGMAGVLDSARFRHFLAEEFSVSVEDVTAFVLGGHGDDMVPLVRYSTVAGIPLPDLVKMGWTTQEKLDAMVERTRKGGGEIVNLLKTGSAFYAPAASAIAMAESYLKDKKRVLPCAAYLTGQYGVDGLFIGVPIVIGENGVERIVEVAFSAEEKAMFDKSVNSVKGLVEACKGINAALA.

Residues 10 to 15 (GAGQIG) and Asp-34 contribute to the NAD(+) site. 2 residues coordinate substrate: Arg-83 and Arg-89. Residues Asn-96 and 119–121 (ITN) each bind NAD(+). Substrate is bound by residues Asn-121 and Arg-152. His-176 functions as the Proton acceptor in the catalytic mechanism.

Belongs to the LDH/MDH superfamily. MDH type 3 family.

It catalyses the reaction (S)-malate + NAD(+) = oxaloacetate + NADH + H(+). In terms of biological role, catalyzes the reversible oxidation of malate to oxaloacetate. The sequence is that of Malate dehydrogenase from Methylobacterium nodulans (strain LMG 21967 / CNCM I-2342 / ORS 2060).